Consider the following 124-residue polypeptide: Fluoride-specific ion channel FluC (124 aa).

Helical transmembrane passes span 5–25, 38–58, 69–89, and 99–119; these read ILAV…TGTW, TLAV…LFLL, GLIV…LDTL, and LALG…WAGL. Na(+) is bound by residues Gly76 and Thr79.

This sequence belongs to the fluoride channel Fluc/FEX (TC 1.A.43) family.

It localises to the cell inner membrane. The enzyme catalyses fluoride(in) = fluoride(out). Na(+) is not transported, but it plays an essential structural role and its presence is essential for fluoride channel function. In terms of biological role, fluoride-specific ion channel. Important for reducing fluoride concentration in the cell, thus reducing its toxicity. The protein is Fluoride-specific ion channel FluC of Pseudomonas syringae pv. syringae (strain B728a).